Here is a 242-residue protein sequence, read N- to C-terminus: Eukaryotic translation initiation factor 3 subunit J (242 aa).

Over residues 1 to 10 the composition is skewed to acidic residues; it reads MASWDDEDFE. 3 disordered regions span residues 1–58, 71–97, and 201–242; these read MASW…KAQR, MKLK…MMNA, and REEK…DDFM. Residues 11–21 are compositionally biased toward low complexity; sequence VPAAATPAVPA. The span at 23 to 38 shows a compositional bias: acidic residues; that stretch reads WDDDEEEDVMDSWDAE. A compositionally biased stretch (basic and acidic residues) spans 71-89; that stretch reads MKLKPEDASTKRDRQRQAE.

It belongs to the eIF-3 subunit J family. Component of the eukaryotic translation initiation factor 3 (eIF-3) complex.

Its subcellular location is the cytoplasm. Component of the eukaryotic translation initiation factor 3 (eIF-3) complex, which is involved in protein synthesis of a specialized repertoire of mRNAs and, together with other initiation factors, stimulates binding of mRNA and methionyl-tRNAi to the 40S ribosome. The eIF-3 complex specifically targets and initiates translation of a subset of mRNAs involved in cell proliferation. The chain is Eukaryotic translation initiation factor 3 subunit J from Yarrowia lipolytica (strain CLIB 122 / E 150) (Yeast).